A 633-amino-acid polypeptide reads, in one-letter code: Beta-myrcene synthase TPS15CT (633 aa).

A chloroplast-targeting transit peptide spans 1–55 (MHCMAVHQFSPSIVSSLPTISTYNNNHFCRFFTPKTSISPISKTKSKSSTCYPIQ). Positions 344, 381, 385, 525, and 528 each coordinate (2E)-geranyl diphosphate. Positions 381 and 385 each coordinate Mg(2+). Positions 381-385 (DDIYD) match the DDXXD motif motif. Mg(2+)-binding residues include aspartate 528, threonine 532, and glutamate 536.

This sequence belongs to the terpene synthase family. Tpsb subfamily. Mg(2+) serves as cofactor. The cofactor is Mn(2+).

It is found in the plastid. The protein resides in the chloroplast. The catalysed reaction is (2E)-geranyl diphosphate = beta-myrcene + diphosphate. It participates in secondary metabolite biosynthesis; terpenoid biosynthesis. Involved in monoterpene (C10) olefins biosynthesis, constituants of cannabinoids and terpenoids-rich resins. Catalyzes strictly the conversion of (2E)-geranyl diphosphate to beta-myrcene. In Cannabis sativa (Hemp), this protein is Beta-myrcene synthase TPS15CT.